Here is a 67-residue protein sequence, read N- to C-terminus: Protein AaeX (67 aa).

The next 2 helical transmembrane spans lie at 3 to 23 (VLPV…ELII) and 43 to 63 (LVWH…YLVS).

It belongs to the AaeX family.

The protein localises to the cell membrane. This is Protein AaeX from Pantoea vagans (strain C9-1) (Pantoea agglomerans (strain C9-1)).